Consider the following 87-residue polypeptide: Small ribosomal subunit protein bS20 (87 aa).

Residues 1–27 (MANIKSAKKRALQSERRRQHNASRRSM) are compositionally biased toward basic residues. Residues 1–31 (MANIKSAKKRALQSERRRQHNASRRSMTRTS) form a disordered region.

Belongs to the bacterial ribosomal protein bS20 family.

Binds directly to 16S ribosomal RNA. This is Small ribosomal subunit protein bS20 from Pseudoalteromonas atlantica (strain T6c / ATCC BAA-1087).